A 153-amino-acid polypeptide reads, in one-letter code: UPF0251 protein Daud_0090 (153 aa).

Basic and acidic residues predominate over residues 129–138 (ELMTRPERCS). Positions 129–153 (ELMTRPERCSRPKRGAGKYRVPKKR) are disordered. The segment covering 139–153 (RPKRGAGKYRVPKKR) has biased composition (basic residues).

Belongs to the UPF0251 family.

The protein is UPF0251 protein Daud_0090 of Desulforudis audaxviator (strain MP104C).